The chain runs to 919 residues: Lipoxygenase 3, chloroplastic (919 aa).

The transit peptide at 1-52 (MALAKELMGYPLITERSSLVSSASHFKKRTQSTQFSINPFDRRPRKTKSGVV) directs the protein to the chloroplast. Residues 86 to 222 (VRAVVTVRNK…DHPDKRIFFT (137 aa)) form the PLAT domain. The 695-residue stretch at 225–919 (PYLPNETPSG…CRGVPNSVSI (695 aa)) folds into the Lipoxygenase domain. The disordered stretch occupies residues 272-310 (PDKSSELSRPKLGGKEVPYPRRCRTGRQSTVSDKDAESR). Residues histidine 578, histidine 583, histidine 770, asparagine 774, and isoleucine 919 each contribute to the Fe cation site.

Belongs to the lipoxygenase family. The cofactor is Fe cation. Expressed in roots and leaves.

Its subcellular location is the plastid. The protein localises to the chloroplast. The enzyme catalyses (9Z,12Z)-octadecadienoate + O2 = (13S)-hydroperoxy-(9Z,11E)-octadecadienoate. The catalysed reaction is (9Z,12Z,15Z)-octadecatrienoate + O2 = (13S)-hydroperoxy-(9Z,11E,15Z)-octadecatrienoate. Its pathway is lipid metabolism; oxylipin biosynthesis. 13S-lipoxygenase that can use linolenic acid as substrates. Plant lipoxygenases may be involved in a number of diverse aspects of plant physiology including growth and development, pest resistance, and senescence or responses to wounding. Catalyzes the hydroperoxidation of lipids containing a cis,cis-1,4-pentadiene structure. The protein is Lipoxygenase 3, chloroplastic (LOX3) of Arabidopsis thaliana (Mouse-ear cress).